The chain runs to 260 residues: UPF0246 protein Bxeno_A1262 (260 aa).

The protein belongs to the UPF0246 family.

The chain is UPF0246 protein Bxeno_A1262 from Paraburkholderia xenovorans (strain LB400).